A 501-amino-acid polypeptide reads, in one-letter code: Glycerol kinase (501 aa).

ADP is bound at residue threonine 11. Positions 11, 12, and 13 each coordinate ATP. Threonine 11 serves as a coordination point for sn-glycerol 3-phosphate. Arginine 15 provides a ligand contact to ADP. Arginine 81, glutamate 82, tyrosine 133, and aspartate 242 together coordinate sn-glycerol 3-phosphate. Positions 81, 82, 133, 242, and 243 each coordinate glycerol. ADP contacts are provided by threonine 264 and glycine 307. ATP-binding residues include threonine 264, glycine 307, glutamine 311, and glycine 409. ADP contacts are provided by glycine 409 and asparagine 413.

Belongs to the FGGY kinase family.

The catalysed reaction is glycerol + ATP = sn-glycerol 3-phosphate + ADP + H(+). Its pathway is polyol metabolism; glycerol degradation via glycerol kinase pathway; sn-glycerol 3-phosphate from glycerol: step 1/1. Inhibited by fructose 1,6-bisphosphate (FBP). In terms of biological role, key enzyme in the regulation of glycerol uptake and metabolism. Catalyzes the phosphorylation of glycerol to yield sn-glycerol 3-phosphate. This is Glycerol kinase from Borrelia garinii subsp. bavariensis (strain ATCC BAA-2496 / DSM 23469 / PBi) (Borreliella bavariensis).